A 107-amino-acid chain; its full sequence is Phosphoribosyl-ATP pyrophosphatase (107 aa).

This sequence belongs to the PRA-PH family.

It is found in the cytoplasm. The enzyme catalyses 1-(5-phospho-beta-D-ribosyl)-ATP + H2O = 1-(5-phospho-beta-D-ribosyl)-5'-AMP + diphosphate + H(+). It functions in the pathway amino-acid biosynthesis; L-histidine biosynthesis; L-histidine from 5-phospho-alpha-D-ribose 1-diphosphate: step 2/9. The protein is Phosphoribosyl-ATP pyrophosphatase of Novosphingobium aromaticivorans (strain ATCC 700278 / DSM 12444 / CCUG 56034 / CIP 105152 / NBRC 16084 / F199).